The primary structure comprises 822 residues: Tubulin polyglutamylase TTLL6 (822 aa).

Residues 1–24 form a disordered region; that stretch reads MLQCLTSESEEGAEEREESSTEDL. Residues 8-24 show a composition bias toward acidic residues; it reads ESEEGAEEREESSTEDL. The region spanning 57-400 is the TTL domain; sequence KKRLVINLSN…GNCDKKKVLE (344 aa). Residues Lys174, 180-181, 202-205, and 215-217 each bind ATP; these read QG, QLYI, and KFD. Residue Gln180 coordinates a protein. Arg241 is an L-glutamate binding site. Residue 263–264 participates in ATP binding; it reads TN. Positions 265, 266, and 283 each coordinate L-glutamate. Positions 346, 359, and 361 each coordinate Mg(2+). His362 lines the a protein pocket. Residues 371–450 form a c-MTBD region region; it reads KLDKEVKDSL…CGGFRLIYPG (80 aa). Lys377 contacts L-glutamate. Disordered regions lie at residues 736 to 772 and 791 to 822; these read PLFPAPKSQYPTLSKERCPHSRSSSRKKEMNSPSVFV and TQARLDPRPSRSHSGTTTRDSSTQDPKHTATA. A compositionally biased stretch (polar residues) spans 802–814; it reads SHSGTTTRDSSTQ.

It belongs to the tubulin--tyrosine ligase family. As to quaternary structure, found in a complex with CEP41. Mg(2+) is required as a cofactor. Highly expressed in testis. Expressed in brain, heart, kidney, liver, lung, muscle and trachea. In the brain, specifically expressed in ependymal cilia.

It is found in the cytoplasm. It localises to the cytoskeleton. Its subcellular location is the cilium axoneme. The protein localises to the cilium basal body. The enzyme catalyses L-glutamyl-[protein] + L-glutamate + ATP = gamma-L-glutamyl-L-glutamyl-[protein] + ADP + phosphate + H(+). It carries out the reaction (L-glutamyl)(n)-gamma-L-glutamyl-L-glutamyl-[protein] + L-glutamate + ATP = (L-glutamyl)(n+1)-gamma-L-glutamyl-L-glutamyl-[protein] + ADP + phosphate + H(+). In terms of biological role, polyglutamylase which modifies both tubulin and non-tubulin proteins, generating alpha-linked polyglutamate side chains on the gamma-carboxyl group of specific glutamate residues of target proteins. Preferentially mediates ATP-dependent long polyglutamate chain elongation over the initiation step of the polyglutamylation reaction. Preferentially modifies the alpha-tubulin tail over a beta-tail. Promotes tubulin polyglutamylation which stimulates spastin/SPAST-mediated microtubule severing, thereby regulating microtubule functions. Mediates microtubule polyglutamylation in primary cilia axoneme which is important for ciliary structural formation and motility. Mediates microtubule polyglutamylation in motile cilia, necessary for the regulation of ciliary coordinated beating. Polyglutamylates non-tubulin protein nucleotidyltransferase CGAS, leading to CGAS DNA-binding inhibition, thereby preventing antiviral defense response. The sequence is that of Tubulin polyglutamylase TTLL6 from Mus musculus (Mouse).